The sequence spans 180 residues: FMN reductase (NADH) RutF (180 aa).

This sequence belongs to the non-flavoprotein flavin reductase family. RutF subfamily.

It catalyses the reaction FMNH2 + NAD(+) = FMN + NADH + 2 H(+). Functionally, catalyzes the reduction of FMN to FMNH2 which is used to reduce pyrimidine by RutA via the Rut pathway. The sequence is that of FMN reductase (NADH) RutF from Variovorax paradoxus (strain S110).